Consider the following 150-residue polypeptide: Protein adenylyltransferase MntA (150 aa).

A GSX(10)DXD motif motif is present at residues 32–46; the sequence is GSRATGNINANSDWD. Catalysis depends on residues Asp44 and Asp46. Mg(2+) contacts are provided by Asp44, Asp46, and Asp86.

It belongs to the MntA antitoxin family. As to quaternary structure, forms a complex with HepT, probably MntA(1):HepT(2) in vivo; can only be purified when both 'Arg-102' and 'Tyr-109' (or 'His-107' and 'Tyr-109') of HepThave been mutated. The fully di-AMPylated HepT homodimer is not found in a complex with MntA. Mg(2+) serves as cofactor.

It carries out the reaction L-tyrosyl-[protein] + ATP = O-(5'-adenylyl)-L-tyrosyl-[protein] + diphosphate. It catalyses the reaction O-(5'-adenylyl)-L-tyrosyl-[protein] + ATP = O-[5'-(adenylyl-(5'-&gt;3')-adenylyl)]-L-tyrosyl-[protein] + diphosphate. Antitoxin component of a type VII toxin-antitoxin (TA) system. Upon cloning in E.coli neutralizes the effect of cognate toxin HepT. Neutralization is mostly due to di-AMPylation of toxin by this enzyme. Successively di-AMPylates HepT on 'Tyr-109'. In vitro will use ATP, dATP, GTP, dGTP, TTP or UTP to generate a mono-modified protein, but requires a purine nucleotide for the second modification reaction (ATP, dATP or GTP). This Aphanizomenon flos-aquae (strain 2012/KM1/D3) protein is Protein adenylyltransferase MntA.